Consider the following 358-residue polypeptide: Phospho-N-acetylmuramoyl-pentapeptide-transferase (358 aa).

The next 10 membrane-spanning stretches (helical) occupy residues 21–41 (YLTLRAILGVLTALVISFVVG), 71–91 (TMGGALILVAIAAATLLWADL), 95–115 (YIWVVLVVTLLFGGVGFVDDY), 133–153 (FWQSVIALGVALFLYFTASVA), 166–186 (VAVNLGGYYVLLTYFVVVGSS), 197–217 (GLAVLPTVLVGGALGIFAYAA), 234–254 (AGELVVFCGALVGAGLGFLWF), 261–281 (VFMGDIGALALGAALGILAVL), 286–306 (LVLFIMGGVFVVETVSVMLQV), and 337–357 (IVRFWIITVILVLIGLATLKI).

Belongs to the glycosyltransferase 4 family. MraY subfamily. It depends on Mg(2+) as a cofactor.

It is found in the cell inner membrane. The catalysed reaction is UDP-N-acetyl-alpha-D-muramoyl-L-alanyl-gamma-D-glutamyl-meso-2,6-diaminopimeloyl-D-alanyl-D-alanine + di-trans,octa-cis-undecaprenyl phosphate = di-trans,octa-cis-undecaprenyl diphospho-N-acetyl-alpha-D-muramoyl-L-alanyl-D-glutamyl-meso-2,6-diaminopimeloyl-D-alanyl-D-alanine + UMP. The protein operates within cell wall biogenesis; peptidoglycan biosynthesis. Catalyzes the initial step of the lipid cycle reactions in the biosynthesis of the cell wall peptidoglycan: transfers peptidoglycan precursor phospho-MurNAc-pentapeptide from UDP-MurNAc-pentapeptide onto the lipid carrier undecaprenyl phosphate, yielding undecaprenyl-pyrophosphoryl-MurNAc-pentapeptide, known as lipid I. The protein is Phospho-N-acetylmuramoyl-pentapeptide-transferase of Nitrosococcus oceani (strain ATCC 19707 / BCRC 17464 / JCM 30415 / NCIMB 11848 / C-107).